The chain runs to 360 residues: Phosphoserine aminotransferase (360 aa).

Arg42 lines the L-glutamate pocket. Residues 76–77 (AS), Trp102, Thr152, Asp172, and Gln195 each bind pyridoxal 5'-phosphate. Lys196 is subject to N6-(pyridoxal phosphate)lysine. Residue 237 to 238 (NT) participates in pyridoxal 5'-phosphate binding.

It belongs to the class-V pyridoxal-phosphate-dependent aminotransferase family. SerC subfamily. In terms of assembly, homodimer. Pyridoxal 5'-phosphate serves as cofactor.

The protein resides in the cytoplasm. The catalysed reaction is O-phospho-L-serine + 2-oxoglutarate = 3-phosphooxypyruvate + L-glutamate. It carries out the reaction 4-(phosphooxy)-L-threonine + 2-oxoglutarate = (R)-3-hydroxy-2-oxo-4-phosphooxybutanoate + L-glutamate. The protein operates within amino-acid biosynthesis; L-serine biosynthesis; L-serine from 3-phospho-D-glycerate: step 2/3. Catalyzes the reversible conversion of 3-phosphohydroxypyruvate to phosphoserine and of 3-hydroxy-2-oxo-4-phosphonooxybutanoate to phosphohydroxythreonine. The chain is Phosphoserine aminotransferase from Bacillus cereus (strain ZK / E33L).